A 403-amino-acid polypeptide reads, in one-letter code: Chorismate synthase (403 aa).

Positions 40 and 46 each coordinate NADP(+). Residues 140–142 (RSS) and 261–262 (QA) contribute to the FMN site. Positions 277 to 298 (RRGSEAHDEMVRTDEGVDRETN) are enriched in basic and acidic residues. Positions 277–307 (RRGSEAHDEMVRTDEGVDRETNRAGGLEGGM) are disordered. FMN is bound by residues glycine 305, 320-324 (KPIST), and arginine 346.

Belongs to the chorismate synthase family. As to quaternary structure, homotetramer. It depends on FMNH2 as a cofactor.

It catalyses the reaction 5-O-(1-carboxyvinyl)-3-phosphoshikimate = chorismate + phosphate. Its pathway is metabolic intermediate biosynthesis; chorismate biosynthesis; chorismate from D-erythrose 4-phosphate and phosphoenolpyruvate: step 7/7. In terms of biological role, catalyzes the anti-1,4-elimination of the C-3 phosphate and the C-6 proR hydrogen from 5-enolpyruvylshikimate-3-phosphate (EPSP) to yield chorismate, which is the branch point compound that serves as the starting substrate for the three terminal pathways of aromatic amino acid biosynthesis. This reaction introduces a second double bond into the aromatic ring system. This Corynebacterium aurimucosum (strain ATCC 700975 / DSM 44827 / CIP 107346 / CN-1) (Corynebacterium nigricans) protein is Chorismate synthase.